The following is a 335-amino-acid chain: MKKIAIDAMGGDYAPKAIVEGVNQAIESFSDIEIQLYGDQSRIESYLVKSDRVSIVHTDEKINSDDEPAKAIRRKKNASMVLAARAVKDGRADAVLSAGNTGALLAAGLFIIGRIKGVDRPGLLSTLPTVDGSGFDMLDLGANAENTAEHLHQYAILGSFYAKHVRGIAKPRIGLLNNGTEATKGDSLRKEVYNFLASDSSLQFIGNVEARDLMSGVADVVVADGFTGNAVLKSIEGTAMSIMGQLKSAIAVGGVKAKFGALLLKSSLYDLKDTLDYSSAGGAVLFGLKAPLVKSHGSSDAKAIFHTIKQVRTMLETDVVGQLVEEFSKESDVND.

This sequence belongs to the PlsX family. As to quaternary structure, homodimer. Probably interacts with PlsY.

The protein resides in the cytoplasm. The enzyme catalyses a fatty acyl-[ACP] + phosphate = an acyl phosphate + holo-[ACP]. Its pathway is lipid metabolism; phospholipid metabolism. Catalyzes the reversible formation of acyl-phosphate (acyl-PO(4)) from acyl-[acyl-carrier-protein] (acyl-ACP). This enzyme utilizes acyl-ACP as fatty acyl donor, but not acyl-CoA. This chain is Phosphate acyltransferase, found in Streptococcus equi subsp. equi (strain 4047).